Reading from the N-terminus, the 643-residue chain is Phosphomethylpyrimidine synthase (643 aa).

Substrate is bound by residues N248, M277, Y306, H342, 362 to 364, 403 to 406, and E442; these read SRG and DGLR. H446 contributes to the Zn(2+) binding site. Y469 provides a ligand contact to substrate. A Zn(2+)-binding site is contributed by H510. 3 residues coordinate [4Fe-4S] cluster: C590, C593, and C598.

This sequence belongs to the ThiC family. As to quaternary structure, homodimer. [4Fe-4S] cluster is required as a cofactor.

The enzyme catalyses 5-amino-1-(5-phospho-beta-D-ribosyl)imidazole + S-adenosyl-L-methionine = 4-amino-2-methyl-5-(phosphooxymethyl)pyrimidine + CO + 5'-deoxyadenosine + formate + L-methionine + 3 H(+). It functions in the pathway cofactor biosynthesis; thiamine diphosphate biosynthesis. Functionally, catalyzes the synthesis of the hydroxymethylpyrimidine phosphate (HMP-P) moiety of thiamine from aminoimidazole ribotide (AIR) in a radical S-adenosyl-L-methionine (SAM)-dependent reaction. The chain is Phosphomethylpyrimidine synthase from Burkholderia pseudomallei (strain 1106a).